A 502-amino-acid chain; its full sequence is ATP synthase subunit alpha (502 aa).

169–176 contacts ATP; that stretch reads GDRQVGKT.

This sequence belongs to the ATPase alpha/beta chains family. F-type ATPases have 2 components, CF(1) - the catalytic core - and CF(0) - the membrane proton channel. CF(1) has five subunits: alpha(3), beta(3), gamma(1), delta(1), epsilon(1). CF(0) has three main subunits: a(1), b(2) and c(9-12). The alpha and beta chains form an alternating ring which encloses part of the gamma chain. CF(1) is attached to CF(0) by a central stalk formed by the gamma and epsilon chains, while a peripheral stalk is formed by the delta and b chains.

The protein resides in the cell membrane. The enzyme catalyses ATP + H2O + 4 H(+)(in) = ADP + phosphate + 5 H(+)(out). Functionally, produces ATP from ADP in the presence of a proton gradient across the membrane. The alpha chain is a regulatory subunit. This is ATP synthase subunit alpha from Lysinibacillus sphaericus (strain C3-41).